Reading from the N-terminus, the 342-residue chain is MSAFTPASEVLLRHSDDFEQSRILFAGDLQDDLPARFECAASRAHTQQFHHWQVLSRQMGDNVRFSLVAQACDIADCDTLIYYWPKNKPEAQFQLMNILSLMPSGADIFVVGENRSGVRSAEQMLADYAPLNKVDSARRCGLYHGRLEKQPLFSLEPYWDEYSIDGLIIKTLPGVFSRDGLDVGSQLLLSTLTPHTKGKVLDVGCGAGVLSAALASHSPKVRLTLCDVSAPAVEASRATLAVNGLDGDVFASNVFSEVKGRFDMIISNPPFHDGMQTSLDAAQTLIRSAVRHLNSGGELRIVANAFLPYPKILDETFGFHDVIAQTGRFKVYRTVMTRQAKK.

It belongs to the methyltransferase superfamily. RsmC family. Monomer.

It is found in the cytoplasm. It catalyses the reaction guanosine(1207) in 16S rRNA + S-adenosyl-L-methionine = N(2)-methylguanosine(1207) in 16S rRNA + S-adenosyl-L-homocysteine + H(+). Specifically methylates the guanine in position 1207 of 16S rRNA in the 30S particle. The chain is Ribosomal RNA small subunit methyltransferase C from Salmonella arizonae (strain ATCC BAA-731 / CDC346-86 / RSK2980).